The following is a 307-amino-acid chain: MITVSAPAKVNLHLEVLGLRSDGFHELAMVMQSIDLADRLSFQNTADAQLSLTCDDASLSVGDDNLILRAAQLLRDRSGFSELGASIHLEKRIPIGAGLAGGSSDGAAALVGLNALWGLGHSTADLERMAAELGSDMPFCVAGGCQLCFGRGEQLEAVPPTPQPLAVLLVKDPTVSVSTPWAYKRCRELKQSHYLADEAAFEQRRQALRSVDWLQPLRSDLPPPLRNDLQDVVAPETAAVRSALDLLDSVPQSLAVAMSGSGPSCFGLFSDLASCRHAQDQLATQLERAGLKAWSCALRSDGVRIEA.

Residue Lys9 is part of the active site. Pro94 to Ser104 is an ATP binding site. Asp136 is an active-site residue.

This sequence belongs to the GHMP kinase family. IspE subfamily.

It catalyses the reaction 4-CDP-2-C-methyl-D-erythritol + ATP = 4-CDP-2-C-methyl-D-erythritol 2-phosphate + ADP + H(+). It participates in isoprenoid biosynthesis; isopentenyl diphosphate biosynthesis via DXP pathway; isopentenyl diphosphate from 1-deoxy-D-xylulose 5-phosphate: step 3/6. Catalyzes the phosphorylation of the position 2 hydroxy group of 4-diphosphocytidyl-2C-methyl-D-erythritol. The polypeptide is 4-diphosphocytidyl-2-C-methyl-D-erythritol kinase (Synechococcus sp. (strain CC9605)).